Consider the following 360-residue polypeptide: Aminomethyltransferase (360 aa).

This sequence belongs to the GcvT family. As to quaternary structure, the glycine cleavage system is composed of four proteins: P, T, L and H.

The enzyme catalyses N(6)-[(R)-S(8)-aminomethyldihydrolipoyl]-L-lysyl-[protein] + (6S)-5,6,7,8-tetrahydrofolate = N(6)-[(R)-dihydrolipoyl]-L-lysyl-[protein] + (6R)-5,10-methylene-5,6,7,8-tetrahydrofolate + NH4(+). In terms of biological role, the glycine cleavage system catalyzes the degradation of glycine. The sequence is that of Aminomethyltransferase from Pseudoalteromonas translucida (strain TAC 125).